A 450-amino-acid chain; its full sequence is Methionine aminopeptidase 2 (450 aa).

The interval 1–99 is disordered; the sequence is MAVQAPEVDK…LFPNSQYPEG (99 aa). Acidic residues predominate over residues 33–49; it reads GDEDAENEESDEDDDQG. Residues 60–75 show a composition bias toward basic residues; that stretch reads KKKRKRKPKKKKKKGV. His200 is a substrate binding site. Positions 220, 231, and 300 each coordinate a divalent metal cation. His308 is a binding site for substrate. A divalent metal cation is bound by residues Glu336 and Glu431.

The protein belongs to the peptidase M24A family. Methionine aminopeptidase eukaryotic type 2 subfamily. It depends on Co(2+) as a cofactor. Requires Zn(2+) as cofactor. The cofactor is Mn(2+). Fe(2+) serves as cofactor.

It localises to the cytoplasm. The catalysed reaction is Release of N-terminal amino acids, preferentially methionine, from peptides and arylamides.. Its function is as follows. Cotranslationally removes the N-terminal methionine from nascent proteins. The N-terminal methionine is often cleaved when the second residue in the primary sequence is small and uncharged (Met-Ala-, Cys, Gly, Pro, Ser, Thr, or Val). This is Methionine aminopeptidase 2 from Uncinocarpus reesii (strain UAMH 1704).